Consider the following 421-residue polypeptide: 3-isopropylmalate dehydratase large subunit (421 aa).

[4Fe-4S] cluster contacts are provided by Cys302, Cys362, and Cys365.

It belongs to the aconitase/IPM isomerase family. LeuC type 2 subfamily. In terms of assembly, heterodimer of LeuC and LeuD. [4Fe-4S] cluster serves as cofactor.

It carries out the reaction (2R,3S)-3-isopropylmalate = (2S)-2-isopropylmalate. It participates in amino-acid biosynthesis; L-leucine biosynthesis; L-leucine from 3-methyl-2-oxobutanoate: step 2/4. Its function is as follows. Catalyzes the isomerization between 2-isopropylmalate and 3-isopropylmalate, via the formation of 2-isopropylmaleate. The polypeptide is 3-isopropylmalate dehydratase large subunit (Campylobacter curvus (strain 525.92)).